The primary structure comprises 85 residues: Colicin-E6 immunity protein (85 aa).

This sequence belongs to the cloacin immunity protein family.

Its function is as follows. This protein inhibits the 16S RNA hydrolyzing activity of colicin E6 by binding with high affinity to the C-terminal catalytic domain of E6. This protein is able to protect a cell, which harbors the plasmid ColE6 against colicin E6. In Escherichia coli, this protein is Colicin-E6 immunity protein (imm).